The chain runs to 103 residues: Small ribosomal subunit protein uS10 (103 aa).

This sequence belongs to the universal ribosomal protein uS10 family. As to quaternary structure, part of the 30S ribosomal subunit.

Involved in the binding of tRNA to the ribosomes. In Rubrobacter xylanophilus (strain DSM 9941 / JCM 11954 / NBRC 16129 / PRD-1), this protein is Small ribosomal subunit protein uS10.